Here is a 144-residue protein sequence, read N- to C-terminus: Catabolic 3-dehydroquinase (144 aa).

Residue Tyr-24 is the Proton acceptor of the active site. Substrate-binding residues include Asn-76, His-82, and Asp-89. The active-site Proton donor is His-102. Substrate-binding positions include 103 to 104 (IT) and Arg-113.

The protein belongs to the type-II 3-dehydroquinase family. In terms of assembly, homododecamer. Adopts a ring-like structure, composed of an arrangement of two hexameric rings stacked on top of one another.

The catalysed reaction is 3-dehydroquinate = 3-dehydroshikimate + H2O. It participates in aromatic compound metabolism; 3,4-dihydroxybenzoate biosynthesis; 3,4-dihydroxybenzoate from 3-dehydroquinate: step 1/2. In terms of biological role, is involved in the catabolism of quinate. Allows the utilization of quinate as carbon source via the beta-ketoadipate pathway. In Debaryomyces hansenii (strain ATCC 36239 / CBS 767 / BCRC 21394 / JCM 1990 / NBRC 0083 / IGC 2968) (Yeast), this protein is Catabolic 3-dehydroquinase.